The following is a 281-amino-acid chain: Apolipoprotein Eb (281 aa).

Positions 1–18 (MRSLVVFFALAVLTGCQA) are cleaved as a signal peptide. The propeptide occupies 19–24 (RSLFQA). The 3 X approximate tandem repeats stretch occupies residues 34 to 66 (MVDRFWQYVSELNTQTDGMVQNIKGSQLSRELD). 9 tandem repeats follow at residues 67-88 (TLITDTMAELSSYSENLQTQMT), 89-110 (PYASDAAGQLSKDLQLLAGKLQ), 111-132 (TDMTDAKERSTQYLQELKTMME), 133-154 (QNADDVKNRVGTYTRKLKKRLN), 155-176 (KDTEEIRNTVATYMSEMQSRAS), 177-199 (QNADAVKDRFQPYMSQAQDGATQ), 200-227 (KLGAISELMKAQAQEVSEQLEVQAGALK), 228-249 (EKLEETAENLRTSLEGRVDELT), and 254-281 (PYSQKIREQLQEVMDKIKEATAALPTQA). The tract at residues 67-281 (TLITDTMAEL…EATAALPTQA (215 aa)) is 9 X 22 AA approximate tandem repeats.

The protein belongs to the apolipoprotein A1/A4/E family. In terms of assembly, homotetramer.

Its subcellular location is the secreted. It localises to the extracellular space. The protein resides in the extracellular matrix. Functionally, APOE is an apolipoprotein, a protein associating with lipid particles, that mainly functions in lipoprotein-mediated lipid transport between organs via the plasma and interstitial fluids. APOE is a core component of plasma lipoproteins and is involved in their production, conversion and clearance. Apolipoproteins are amphipathic molecules that interact both with lipids of the lipoprotein particle core and the aqueous environment of the plasma. The protein is Apolipoprotein Eb (apoeb) of Danio rerio (Zebrafish).